The following is a 290-amino-acid chain: Protein-glutamine deamidase Cif (290 aa).

The interval 1–26 (MKISPNTISPSQSDPRMSTNVSQRSR) is disordered. Active-site residues include C117, H173, and Q193.

It belongs to the Cif family.

The protein localises to the secreted. The protein resides in the host nucleus. The enzyme catalyses L-glutaminyl-[protein] + H2O = L-glutamyl-[protein] + NH4(+). Functionally, protein-glutamine deamidase effector that inhibits the host cell cycle and other key cellular processes such as the actin network and programmed-cell death. Acts by mediating the side chain deamidation of 'Gln-40' of host NEDD8, converting it to glutamate, thereby abolishing the activity of cullin-RING-based E3 ubiquitin-protein ligase complexes (CRL complexes). Inactivation of CRL complexes prevents ubiquitination and subsequent degradation of the cyclin-dependent kinase inhibitors CDKN1A/p21 and CDKN1B/p27, leading to G1 and G2 cell cycle arrests in host cells. Also able to catalyze deamidation of 'Gln-40' of host ubiquitin in vitro; however, NEDD8 constitutes the preferred substrate in vivo. In Yersinia pseudotuberculosis serotype O:3 (strain YPIII), this protein is Protein-glutamine deamidase Cif.